Here is a 182-residue protein sequence, read N- to C-terminus: MHEETSNSTLQGKTSFSIADILDPAKFNGTRETREISNNRESPKTTSPTQDPSAPNIANASAAKVKSKRIRTAFTLDQLRILERSFQSSHYLSVFERHCIASALGLSETQVKIWFQNRRTKWKKELDGHGGEEQSHCAPTALTQNPIMYALPGHHANHHVHYYPQQTHYLNTSFHPQTLMMY.

The tract at residues methionine 1–arginine 34 is important for interaction with tle3a. Residues proline 24 to alanine 63 are disordered. The span at glycine 29–proline 43 shows a compositional bias: basic and acidic residues. Low complexity predominate over residues proline 52–alanine 63. The homeobox DNA-binding region spans serine 67 to leucine 126.

Belongs to the NK-1 homeobox family. As to quaternary structure, interacts with tle3a.

The protein localises to the nucleus. Its function is as follows. Transcriptional repressor. Activity as a repressor is enhanced by binding to the corepressor tle3a. This is Homeobox protein pnx from Danio rerio (Zebrafish).